The chain runs to 657 residues: UvrABC system protein B (657 aa).

The Helicase ATP-binding domain maps to 25 to 182; the sequence is KSIKKGNEFQ…KKLIEIQYER (158 aa). 38–45 is an ATP binding site; sequence GVTGSGKT. Residues 91-114 carry the Beta-hairpin motif; that stretch reads YYDYYQPEAYVPQTDTFIEKDASI. One can recognise a Helicase C-terminal domain in the interval 429 to 595; sequence QIDDLYTEIQ…TINKEVRDLI (167 aa). The 36-residue stretch at 621–656 folds into the UVR domain; the sequence is KKLIKEYTEEMMLAAKNLQFERAAQLRDEIEELKGK.

This sequence belongs to the UvrB family. Forms a heterotetramer with UvrA during the search for lesions. Interacts with UvrC in an incision complex.

It is found in the cytoplasm. Its function is as follows. The UvrABC repair system catalyzes the recognition and processing of DNA lesions. A damage recognition complex composed of 2 UvrA and 2 UvrB subunits scans DNA for abnormalities. Upon binding of the UvrA(2)B(2) complex to a putative damaged site, the DNA wraps around one UvrB monomer. DNA wrap is dependent on ATP binding by UvrB and probably causes local melting of the DNA helix, facilitating insertion of UvrB beta-hairpin between the DNA strands. Then UvrB probes one DNA strand for the presence of a lesion. If a lesion is found the UvrA subunits dissociate and the UvrB-DNA preincision complex is formed. This complex is subsequently bound by UvrC and the second UvrB is released. If no lesion is found, the DNA wraps around the other UvrB subunit that will check the other stand for damage. This chain is UvrABC system protein B, found in Clostridium botulinum (strain Alaska E43 / Type E3).